The sequence spans 136 residues: ATP synthase epsilon chain, chloroplastic (136 aa).

This sequence belongs to the ATPase epsilon chain family. In terms of assembly, F-type ATPases have 2 components, CF(1) - the catalytic core - and CF(0) - the membrane proton channel. CF(1) has five subunits: alpha(3), beta(3), gamma(1), delta(1), epsilon(1). CF(0) has three main subunits: a, b and c.

The protein resides in the plastid. It localises to the chloroplast thylakoid membrane. Produces ATP from ADP in the presence of a proton gradient across the membrane. The chain is ATP synthase epsilon chain, chloroplastic from Chaetosphaeridium globosum (Charophycean green alga).